We begin with the raw amino-acid sequence, 465 residues long: Putative subtilisin-like proteinase 1 (465 aa).

An N-terminal signal peptide occupies residues 1 to 17 (MILAIISLSVVICREVS). An Inhibitor I9 domain is found at 19-90 (YIVMFDQDPS…VKMVVKDSPV (72 aa)). One can recognise a Peptidase S8 domain in the interval 115–447 (PWGLARVGGS…PSLFNANKKK (333 aa)). Residues D148 and H180 each act as charge relay system in the active site. The cysteines at positions 329 and 360 are disulfide-linked. The active-site Charge relay system is S386.

This sequence belongs to the peptidase S8 family.

It localises to the secreted. The protein localises to the extracellular space. Functionally, may be involved in the degradation of proteins for nutrient acquisition or possess a regulatory function by proteolytic activation of proproteins. This is Putative subtilisin-like proteinase 1 (SPL1) from Encephalitozoon cuniculi (strain GB-M1) (Microsporidian parasite).